Reading from the N-terminus, the 179-residue chain is Transcription factor 21 (179 aa).

The interval 20 to 87 (CDGLKMDSNK…QVQRNAANAR (68 aa)) is disordered. Low complexity predominate over residues 33–46 (TSNESTEESSNCEN). Residues 70-80 (SGVSQEGKQVQ) are compositionally biased toward polar residues. In terms of domain architecture, bHLH spans 79-131 (VQRNAANARERARMRVLSKAFSRLKTTLPWVPPDTKLSKLDTLRLASSYIAHL).

As to quaternary structure, efficient DNA binding requires dimerization with another bHLH protein. Forms a heterodimer with TCF3 and binds the E box (5'-CANNTG-3').

It localises to the nucleus. Involved in epithelial-mesenchymal interactions in kidney and lung morphogenesis that include epithelial differentiation and branching morphogenesis. May play a role in the specification or differentiation of one or more subsets of epicardial cell types. This chain is Transcription factor 21 (TCF21), found in Homo sapiens (Human).